A 153-amino-acid chain; its full sequence is SsrA-binding protein (153 aa).

It belongs to the SmpB family.

The protein resides in the cytoplasm. Required for rescue of stalled ribosomes mediated by trans-translation. Binds to transfer-messenger RNA (tmRNA), required for stable association of tmRNA with ribosomes. tmRNA and SmpB together mimic tRNA shape, replacing the anticodon stem-loop with SmpB. tmRNA is encoded by the ssrA gene; the 2 termini fold to resemble tRNA(Ala) and it encodes a 'tag peptide', a short internal open reading frame. During trans-translation Ala-aminoacylated tmRNA acts like a tRNA, entering the A-site of stalled ribosomes, displacing the stalled mRNA. The ribosome then switches to translate the ORF on the tmRNA; the nascent peptide is terminated with the 'tag peptide' encoded by the tmRNA and targeted for degradation. The ribosome is freed to recommence translation, which seems to be the essential function of trans-translation. This Sulfurovum sp. (strain NBC37-1) protein is SsrA-binding protein.